Here is a 131-residue protein sequence, read N- to C-terminus: Small ribosomal subunit protein uS19 (131 aa).

It belongs to the universal ribosomal protein uS19 family.

In terms of biological role, protein S19 forms a complex with S13 that binds strongly to the 16S ribosomal RNA. This chain is Small ribosomal subunit protein uS19, found in Cenarchaeum symbiosum (strain A).